We begin with the raw amino-acid sequence, 45 residues long: Scolopendra 20417.15 Da toxin (45 aa).

Residues 26-45 (KVANGQEAGQPGAXNMKELH) are disordered.

Belongs to the CRISP family. Venom allergen 5-like subfamily. In terms of processing, contains 3 disulfide bonds. Expressed by the venom gland.

The protein resides in the secreted. The sequence is that of Scolopendra 20417.15 Da toxin from Scolopendra viridicornis nigra (Brazilian giant centipede).